The sequence spans 539 residues: Chaperonin GroEL 1 (539 aa).

ATP is bound by residues 30 to 33 (TLGP), Lys51, 87 to 91 (DGTTT), Gly415, 480 to 482 (NAA), and Asp496.

The protein belongs to the chaperonin (HSP60) family. As to quaternary structure, forms a cylinder of 14 subunits composed of two heptameric rings stacked back-to-back. Interacts with the co-chaperonin GroES.

The protein localises to the cytoplasm. The enzyme catalyses ATP + H2O + a folded polypeptide = ADP + phosphate + an unfolded polypeptide.. Functionally, together with its co-chaperonin GroES, plays an essential role in assisting protein folding. The GroEL-GroES system forms a nano-cage that allows encapsulation of the non-native substrate proteins and provides a physical environment optimized to promote and accelerate protein folding. In Bradyrhizobium sp. (strain ORS 278), this protein is Chaperonin GroEL 1.